Here is a 343-residue protein sequence, read N- to C-terminus: Ubiquitin thioesterase OTU1 (343 aa).

Residues 45-123 form a UBX-like region; the sequence is RCKAKGGTHV…IVEEDQTRPK (79 aa). An OTU domain is found at 144–269; that stretch reads LTRTAVPADN…GIHYDPLQRN (126 aa). Residues 149–155 form a cys-loop region; sequence VPADNSC. The active site involves D152. Residue C155 is the Nucleophile of the active site. The segment at 208–218 is variable-loop; that stretch reads IRRDDTWGGAI. The segment at 258–262 is his-loop; sequence YDGIH. I261 provides a ligand contact to substrate. The active site involves H262. The interval 286 to 291 is S2 site; sequence DIVLVQ. Residues 313-337 form a C2H2-type zinc finger; the sequence is LRCMLCQKGLTGQAEARDHARETGH. Residue H337 is part of the active site.

In terms of assembly, interacts with VCP; the interaction is direct. Interacts with FAF2/UBXD8. Interacts with DERL1; however interaction is dependent on the UBAX-like region, suggesting that it may be indirect. Interacts with PLAA, UBXN6 and VCP; may form a complex involved in macroautophagy.

It is found in the cytoplasm. The catalysed reaction is Thiol-dependent hydrolysis of ester, thioester, amide, peptide and isopeptide bonds formed by the C-terminal Gly of ubiquitin (a 76-residue protein attached to proteins as an intracellular targeting signal).. Hydrolase that can remove conjugated ubiquitin from proteins and participates in endoplasmic reticulum-associated degradation (ERAD) for misfolded lumenal proteins. May act by triming the ubiquitin chain on the associated substrate to facilitate their threading through the VCP/p97 pore. Ubiquitin moieties on substrates may present a steric impediment to the threading process when the substrate is transferred to the VCP pore and threaded through VCP's axial channel. Mediates deubiquitination of 'Lys-27'-, 'Lys-29'- and 'Lys-33'-linked polyubiquitin chains. Also able to hydrolyze 'Lys-11'-linked ubiquitin chains. Cleaves both polyubiquitin and di-ubiquitin. May play a role in macroautophagy, regulating for instance the clearance of damaged lysosomes. May recruit PLAA, UBXN6 and VCP to damaged lysosome membranes decorated with K48-linked ubiquitin chains and remove these chains allowing autophagosome formation. The chain is Ubiquitin thioesterase OTU1 (Yod1) from Rattus norvegicus (Rat).